The primary structure comprises 625 residues: Zinc finger protein 652-A (625 aa).

A disordered region spans residues 80–255 (FFRDSKPINE…PSDKAKSEEK (176 aa)). Residues 82 to 100 (RDSKPINEVHSVKGERENS) are compositionally biased toward basic and acidic residues. Positions 101-127 (GESEEEEDDDDDDDDEDDEEGEEDEDE) are enriched in acidic residues. The segment covering 150-166 (KGDKGVAQDSSHIKTSS) has biased composition (basic and acidic residues). Over residues 167–186 (DDEEGDSGEDDQDSHEDEEN) the composition is skewed to acidic residues. The span at 240-255 (PKEPKSPSDKAKSEEK) shows a compositional bias: basic and acidic residues. A C2H2-type 1 zinc finger spans residues 258 to 281 (LTCDKCPRVFNTRWYLEKHMNVTH). The C2H2-type 2; degenerate zinc-finger motif lies at 285-307 (QICDKCGKKFVLESELSLHLQTD). 6 consecutive C2H2-type zinc fingers follow at residues 312–335 (IQCI…KIVH), 342–364 (FSCE…LVAH), 370–392 (FTCE…SLQH), 398–420 (FRCE…MSIH), 426–448 (FMCQ…MKTH), and 454–476 (FICE…RRTH). Residues 482–505 (YPCDVCGMRFRFSNMLKAHKEKCF) form a C2H2-type 9; degenerate zinc finger.

This sequence belongs to the krueppel C2H2-type zinc-finger protein family.

It localises to the nucleus. In terms of biological role, may be involved in transcriptional regulation. In Xenopus laevis (African clawed frog), this protein is Zinc finger protein 652-A (znf652-a).